Consider the following 115-residue polypeptide: Large ribosomal subunit protein bL20c (115 aa).

It belongs to the bacterial ribosomal protein bL20 family.

The protein localises to the plastid. It is found in the chloroplast. Binds directly to 23S ribosomal RNA and is necessary for the in vitro assembly process of the 50S ribosomal subunit. It is not involved in the protein synthesizing functions of that subunit. The chain is Large ribosomal subunit protein bL20c from Pyropia yezoensis (Susabi-nori).